We begin with the raw amino-acid sequence, 379 residues long: Cytochrome b (379 aa).

The next 4 membrane-spanning stretches (helical) occupy residues phenylalanine 33–methionine 53, tryptophan 77–valine 98, tryptophan 113–leucine 133, and phenylalanine 178–leucine 198. The heme b site is built by histidine 83 and histidine 97. Histidine 182 and histidine 196 together coordinate heme b. Residue histidine 201 participates in a ubiquinone binding. Transmembrane regions (helical) follow at residues threonine 226–phenylalanine 246, leucine 288–asparagine 308, valine 320–glycine 340, and phenylalanine 347–proline 367.

This sequence belongs to the cytochrome b family. In terms of assembly, the cytochrome bc1 complex contains 11 subunits: 3 respiratory subunits (MT-CYB, CYC1 and UQCRFS1), 2 core proteins (UQCRC1 and UQCRC2) and 6 low-molecular weight proteins (UQCRH/QCR6, UQCRB/QCR7, UQCRQ/QCR8, UQCR10/QCR9, UQCR11/QCR10 and a cleavage product of UQCRFS1). This cytochrome bc1 complex then forms a dimer. It depends on heme b as a cofactor.

It localises to the mitochondrion inner membrane. In terms of biological role, component of the ubiquinol-cytochrome c reductase complex (complex III or cytochrome b-c1 complex) that is part of the mitochondrial respiratory chain. The b-c1 complex mediates electron transfer from ubiquinol to cytochrome c. Contributes to the generation of a proton gradient across the mitochondrial membrane that is then used for ATP synthesis. The polypeptide is Cytochrome b (MT-CYB) (Akodon montensis (Montane grass mouse)).